The primary structure comprises 532 residues: D-arabinono-1,4-lactone oxidase (532 aa).

The region spanning 25-199 (YSARPRLYFQ…VRATIRVVPA (175 aa)) is the FAD-binding PCMH-type domain. His62 is modified (pros-8alpha-FAD histidine).

This sequence belongs to the oxygen-dependent FAD-linked oxidoreductase family. FAD serves as cofactor.

It is found in the mitochondrion membrane. The enzyme catalyses D-arabinono-1,4-lactone + O2 = dehydro-D-arabinono-1,4-lactone + H2O2 + H(+). Its pathway is cofactor biosynthesis; D-erythroascorbate biosynthesis; dehydro-D-arabinono-1,4-lactone from D-arabinose: step 2/2. This Eremothecium gossypii (strain ATCC 10895 / CBS 109.51 / FGSC 9923 / NRRL Y-1056) (Yeast) protein is D-arabinono-1,4-lactone oxidase (ALO1).